Reading from the N-terminus, the 467-residue chain is Mothers against decapentaplegic homolog 2 (467 aa).

An N-acetylserine modification is found at Ser2. Thr8 is subject to Phosphothreonine. The MH1 domain occupies Pro10 to Pro176. Lys19 bears the N6-acetyllysine mark. Positions 74, 149, 161, and 166 each coordinate Zn(2+). A compositionally biased stretch (polar residues) spans Pro207–Ile217. Positions Pro207 to Pro251 are disordered. The residue at position 220 (Thr220) is a Phosphothreonine. Positions Pro221–Tyr225 match the PY-motif motif. Polar residues predominate over residues Ser233 to Thr243. Ser240 is subject to Phosphoserine; by CAMK2. Residues Ser245, Ser250, Ser255, Ser458, Ser460, and Ser464 each carry the phosphoserine modification. The 194-residue stretch at Trp274 to Ser467 folds into the MH2 domain. Phosphoserine; by TGFBR1 is present on residues Ser465 and Ser467.

The protein belongs to the dwarfin/SMAD family. Monomer; in the absence of TGF-beta. Heterodimer; in the presence of TGF-beta. Forms a heterodimer with co-SMAD, SMAD4, in the nucleus to form the transactivation complex SMAD2/SMAD4. Found in a complex with SMAD3 and TRIM33 upon addition of TGF-beta. Identified in a complex that contains at least ZNF451, SMAD2, SMAD3 and SMAD4. Interacts (via the MH2 domain) with ZFYVE9; may form trimers with the SMAD4 co-SMAD. Interacts with TAZ/WWRT1. Interacts with FOXH1. Interacts with SNW1. Interacts with CREB-binding protein (CBP) and EP300. Interacts with SNON. Interacts with ALK4/ACVR1B. Interacts with SKOR1. Interacts with SKOR2. Interacts with PRDM16. Interacts (via MH2 domain) with LEMD3. Interacts with RBPMS. Interacts with WWP1. Interacts (dephosphorylated form, via the MH1 and MH2 domains) with RANBP3 (via its C-terminal R domain); the interaction results in the export of dephosphorylated SMAD3 out of the nucleus and termination of the TGF-beta signaling. Interacts with PDPK1 (via PH domain). Interacts with DAB2; the interactions are enhanced upon TGF-beta stimulation. Interacts with USP15. Interacts with PPP5C. Interacts with LDLRAD4 (via the SMAD interaction motif). Interacts (via MH2 domain) with PMEPA1 (via the SMAD interaction motif). Interacts with ZFHX3. Interacts with ZNF451. Interacts with SMURF2 when phosphorylated on Ser-465/467. Interacts with PPM1A. Interacts with TGF-beta. Interacts with TGFBR1. Interacts with TGIF. Interacts with SMAD3 and TRIM33. Interacts with ZNF580. Interacts with NEDD4L in response to TGF-beta. Interacts with HGS. Interacts with AIP1. Interacts with WWP1. Interacts with PML. Interacts weakly with ZNF8. Interacts (when phosphorylated) with RNF111; RNF111 acts as an enhancer of the transcriptional responses by mediating ubiquitination and degradation of SMAD2 inhibitors. Interacts with YAP1 (when phosphorylated at 'Ser-55'). Interacts when phosphorylated with IPO7; the interaction facilitates translocation of SMAD2 to the nucleus. Interacts with MTMR4; negatively regulates TGF-beta signaling through SMAD2 dephosphorylation and retention in endosomes. In response to TGF-beta, phosphorylated on the C-terminal SXS motif by TGF-beta and activin type 1 receptor kinases, phosphorylation declines progressively in a KMT5A-dependent manner. Phosphorylation in this motif is required for interaction with a number of proteins including SMURF2, SNON and SMAD4 in response to TGF-beta. Dephosphorylated in this motif by PPM1A leading to disruption of the SMAD2/3-SMAD4 complex, nuclear export and termination of the TGF-beta signaling. In response to decorin, the naturally occurring inhibitor of TGF-beta signaling, phosphorylated on Ser-240 by CaMK2. Phosphorylated by MAPK3 upon EGF stimulation; which increases transcriptional activity and stability, and is blocked by calmodulin. Phosphorylated by PDPK1. In terms of processing, acetylated on Lys-19 by coactivators in response to TGF-beta signaling, which increases transcriptional activity. Post-translationally, in response to TGF-beta, ubiquitinated by NEDD4L; which promotes its degradation. Monoubiquitinated, leading to prevent DNA-binding. Deubiquitination by USP15 alleviates inhibition and promotes activation of TGF-beta target genes. Ubiquitinated by RNF111, leading to its degradation: only SMAD2 proteins that are 'in use' are targeted by RNF111, RNF111 playing a key role in activating SMAD2 and regulating its turnover.

Its subcellular location is the cytoplasm. It is found in the nucleus. In terms of biological role, receptor-regulated SMAD (R-SMAD) that is an intracellular signal transducer and transcriptional modulator activated by TGF-beta (transforming growth factor) and activin type 1 receptor kinases. Binds the TRE element in the promoter region of many genes that are regulated by TGF-beta and, on formation of the SMAD2/SMAD4 complex, activates transcription. Promotes TGFB1-mediated transcription of odontoblastic differentiation genes in dental papilla cells. Positively regulates PDPK1 kinase activity by stimulating its dissociation from the 14-3-3 protein YWHAQ which acts as a negative regulator. This chain is Mothers against decapentaplegic homolog 2 (SMAD2), found in Bos taurus (Bovine).